We begin with the raw amino-acid sequence, 1014 residues long: Klotho (1014 aa).

The first 34 residues, 1-34, serve as a signal peptide directing secretion; it reads MLARAPPRRPPRLVLLRLLLLHLLLLALRARCLS. Residues 35–982 are Extracellular-facing; that stretch reads AEPGQGAQTW…TECGFFQTRK (948 aa). Glycosyl hydrolase-1 stretches follow at residues 59-508 and 517-955; these read LHDT…DNGF and LEGT…SNGF. N-linked (GlcNAc...) asparagine glycosylation is found at N161, N285, N346, N609, N614, and N696. Residues 983–1003 traverse the membrane as a helical segment; the sequence is SLLVFISFLVFTFIISLALIF. The Cytoplasmic segment spans residues 1004–1014; it reads HYSKKGQRSYK.

This sequence belongs to the glycosyl hydrolase 1 family. Klotho subfamily. Homodimer. Interacts with FGF23 and FGFR1. In terms of processing, N-glycosylated. Membrane-bound protein is present in distal renal tubules, inner ear, ependymal cells of brain choroid plexus, elongating spermatids and mature oocytes (at protein level). Soluble peptide is present in serum (100 pM) and cerebrospinal fluid. Expressed strongly in kidney, moderately in brain choroid plexus, and at low levels in pituitary, placenta, skeletal muscle, urinary bladder, aorta, pancreas, testis, ovary, colon, thyroid gland and adipocytes.

Its subcellular location is the cell membrane. The protein localises to the apical cell membrane. The protein resides in the secreted. The catalysed reaction is a beta-D-glucuronoside + H2O = D-glucuronate + an alcohol. With respect to regulation, inhibited by D-saccharic acid 1,4-lactone and taurocholic acid. In terms of biological role, may have weak glycosidase activity towards glucuronylated steroids. However, it lacks essential active site Glu residues at positions 241 and 874, suggesting it may be inactive as a glycosidase in vivo. May be involved in the regulation of calcium and phosphorus homeostasis by inhibiting the synthesis of active vitamin D. Essential factor for the specific interaction between FGF23 and FGFR1. Functionally, the Klotho peptide generated by cleavage of the membrane-bound isoform may be an anti-aging circulating hormone which would extend life span by inhibiting insulin/IGF1 signaling. This chain is Klotho (Kl), found in Mus musculus (Mouse).